Consider the following 185-residue polypeptide: Elongation factor P (185 aa).

It belongs to the elongation factor P family.

The protein localises to the cytoplasm. It participates in protein biosynthesis; polypeptide chain elongation. Its function is as follows. Involved in peptide bond synthesis. Stimulates efficient translation and peptide-bond synthesis on native or reconstituted 70S ribosomes in vitro. Probably functions indirectly by altering the affinity of the ribosome for aminoacyl-tRNA, thus increasing their reactivity as acceptors for peptidyl transferase. The protein is Elongation factor P of Thermosynechococcus vestitus (strain NIES-2133 / IAM M-273 / BP-1).